The sequence spans 460 residues: uncharacterized protein (460 aa).

Residues 6–64 (PVKKNNDYEIYIDDFGNMGEGIGKIDNFTVFVKDAVKGEKVRAKIIKVNKSFAIGKLID) form the TRAM domain. [4Fe-4S] cluster-binding residues include Cys-77, Cys-83, Cys-86, and Cys-166. S-adenosyl-L-methionine contacts are provided by Gln-290, Tyr-319, Glu-340, and Asp-388. Cys-415 serves as the catalytic Nucleophile.

The protein belongs to the class I-like SAM-binding methyltransferase superfamily. RNA M5U methyltransferase family.

This is an uncharacterized protein from Clostridium acetobutylicum (strain ATCC 824 / DSM 792 / JCM 1419 / IAM 19013 / LMG 5710 / NBRC 13948 / NRRL B-527 / VKM B-1787 / 2291 / W).